The chain runs to 779 residues: Nucleolar complex protein 3 homolog (779 aa).

Disordered stretches follow at residues 1-20 (MGFA…TNKT) and 100-189 (NAKR…SHLS). Residues 114 to 124 (DSDEDEDEDDV) show a composition bias toward acidic residues. Positions 136–160 (EEGHEELLPIKLKDGTLIRPTREKE) are enriched in basic and acidic residues. A compositionally biased stretch (acidic residues) spans 161–178 (VEEQEEEEKSDIDEGEED). Residues 434–474 (AKKYQIKKERASKTAKKYKKQLARLEADLLEVEAEESLTKK) are a coiled coil.

This sequence belongs to the CBF/MAK21 family.

The protein resides in the nucleus. The protein localises to the nucleolus. This chain is Nucleolar complex protein 3 homolog, found in Caenorhabditis briggsae.